The following is a 378-amino-acid chain: Dihydroorotate dehydrogenase (quinone) (378 aa).

Residues 77-81 (AGFDK) and Thr101 each bind FMN. Lys81 is a binding site for substrate. 126 to 130 (NRMGF) provides a ligand contact to substrate. Asn158 and Asn191 together coordinate FMN. Asn191 lines the substrate pocket. Catalysis depends on Ser194, which acts as the Nucleophile. Asn196 lines the substrate pocket. Residues Lys229 and Thr257 each contribute to the FMN site. 258–259 (NT) lines the substrate pocket. Residues Gly287, Gly316, and 337–338 (YT) each bind FMN.

The protein belongs to the dihydroorotate dehydrogenase family. Type 2 subfamily. In terms of assembly, monomer. Requires FMN as cofactor.

It localises to the cell membrane. It carries out the reaction (S)-dihydroorotate + a quinone = orotate + a quinol. Its pathway is pyrimidine metabolism; UMP biosynthesis via de novo pathway; orotate from (S)-dihydroorotate (quinone route): step 1/1. In terms of biological role, catalyzes the conversion of dihydroorotate to orotate with quinone as electron acceptor. This chain is Dihydroorotate dehydrogenase (quinone), found in Synechococcus elongatus (strain ATCC 33912 / PCC 7942 / FACHB-805) (Anacystis nidulans R2).